The chain runs to 382 residues: Lipid-A-disaccharide synthase (382 aa).

This sequence belongs to the LpxB family.

The catalysed reaction is 2-N,3-O-bis[(3R)-3-hydroxytetradecanoyl]-alpha-D-glucosaminyl 1-phosphate + UDP-2-N,3-O-bis[(3R)-3-hydroxytetradecanoyl]-alpha-D-glucosamine = lipid A disaccharide (E. coli) + UDP + H(+). The enzyme catalyses a lipid X + a UDP-2-N,3-O-bis[(3R)-3-hydroxyacyl]-alpha-D-glucosamine = a lipid A disaccharide + UDP + H(+). The protein operates within glycolipid biosynthesis; lipid IV(A) biosynthesis; lipid IV(A) from (3R)-3-hydroxytetradecanoyl-[acyl-carrier-protein] and UDP-N-acetyl-alpha-D-glucosamine: step 5/6. Condensation of UDP-2,3-diacylglucosamine and 2,3-diacylglucosamine-1-phosphate to form lipid A disaccharide, a precursor of lipid A, a phosphorylated glycolipid that anchors the lipopolysaccharide to the outer membrane of the cell. This chain is Lipid-A-disaccharide synthase, found in Salmonella heidelberg (strain SL476).